We begin with the raw amino-acid sequence, 59 residues long: Chromatin protein Cren7 (59 aa).

It belongs to the Cren7 family. In terms of assembly, monomer. Methylated at multiple sites, to varying extents.

It is found in the chromosome. Its subcellular location is the cytoplasm. A chromatin protein, binds double-stranded DNA without sequence specificity. Constrains negative DNA supercoils. The protein is Chromatin protein Cren7 of Sulfolobus acidocaldarius (strain ATCC 33909 / DSM 639 / JCM 8929 / NBRC 15157 / NCIMB 11770).